The following is a 68-amino-acid chain: Antimicrobial peptide VpCT3 (68 aa).

An N-terminal signal peptide occupies residues 1-23 (MKTQIVILIVAVLVLQLVSQSDA). Residue leucine 36 is modified to Leucine amide. Positions 37–68 (GKRGLKNLDQYNDLFDGEISDADIKFLQDLMR) are excised as a propeptide.

The protein belongs to the non-disulfide-bridged peptide (NDBP) superfamily. Short antimicrobial peptide (group 4) family. As to expression, expressed by the venom gland.

It is found in the secreted. The protein localises to the target cell membrane. Antimicrobial peptide with weak activity against all bacteria tested (MIC&gt;100 uM) and all yeasts tested (MIC&gt;200 uM). Also provokes weak hemolysis on human erythrocytes (HC(50)=83.7 uM). The chain is Antimicrobial peptide VpCT3 from Mesomexovis punctatus (Scorpion).